Reading from the N-terminus, the 377-residue chain is Flap endonuclease 1 (377 aa).

The tract at residues 1 to 104 (MGIQGLAKLL…GELAKRTERR (104 aa)) is N-domain. D34 provides a ligand contact to Mg(2+). Positions 47 and 70 each coordinate DNA. 5 residues coordinate Mg(2+): D86, E158, E160, D179, and D181. The interval 122–253 (NIDKFSRRLV…KRSVDLIRQH (132 aa)) is I-domain. Residue E158 participates in DNA binding. DNA is bound by residues G231 and D233. Position 233 (D233) interacts with Mg(2+). Residues 336 to 344 (TQGRLDSFF) are interaction with PCNA. Residues 337–377 (QGRLDSFFKVLPSPANKRKLQDGKGSQNKKAKTGGKFKRPK) are disordered. Residues 363-377 (QNKKAKTGGKFKRPK) show a composition bias toward basic residues.

This sequence belongs to the XPG/RAD2 endonuclease family. FEN1 subfamily. As to quaternary structure, interacts with PCNA. Three molecules of FEN1 bind to one PCNA trimer with each molecule binding to one PCNA monomer. PCNA stimulates the nuclease activity without altering cleavage specificity. Mg(2+) is required as a cofactor. Phosphorylated. Phosphorylation upon DNA damage induces relocalization to the nuclear plasma.

The protein resides in the nucleus. It localises to the nucleolus. It is found in the nucleoplasm. The protein localises to the mitochondrion. Its function is as follows. Structure-specific nuclease with 5'-flap endonuclease and 5'-3' exonuclease activities involved in DNA replication and repair. During DNA replication, cleaves the 5'-overhanging flap structure that is generated by displacement synthesis when DNA polymerase encounters the 5'-end of a downstream Okazaki fragment. It enters the flap from the 5'-end and then tracks to cleave the flap base, leaving a nick for ligation. Also involved in the long patch base excision repair (LP-BER) pathway, by cleaving within the apurinic/apyrimidinic (AP) site-terminated flap. Acts as a genome stabilization factor that prevents flaps from equilibrating into structures that lead to duplications and deletions. Also possesses 5'-3' exonuclease activity on nicked or gapped double-stranded DNA, and exhibits RNase H activity. Also involved in replication and repair of rDNA and in repairing mitochondrial DNA. This Nematostella vectensis (Starlet sea anemone) protein is Flap endonuclease 1.